Consider the following 564-residue polypeptide: MLAGVLLLQIWLKCKYANVQFGEHGFNGDEFYLDFYINENFSTKQFAKIESDLNSLSSKLEGISQKFVSLDEALSFFENDQFTKNLLKKSNLNKFKITFFENKHFWIEDLTLTFIKKSFIKLLNVSVNYFLGDPSQLQLQRINGIFAQSKKELEQLIKENEERLKKDHRSLGKQLELFSFDPLIGAGLPIWLAKGTTLRNIIGNFVHHQQLLFGFNTVCSPVLANIELFKISGHYQHYKEDMFPAIKLDSQAMMLRPMTCPHHCLIFKQKRYSYKKMPQRFSEDSILHRFEASGGLIGLERVRCMTLLDNHIFCRADQIKSEIKNAFNLIQKVNKKFGFIFDRIDLSLHDPKNQSKFIDNPGLWRESESQMENVLKDLNIQYQKEIGAAAFYGPKIDFQFKTIFKKMITIATIQLDFLLPEKFDLTYIDKKNTLKKPVIIHVGIIGTYERFIAALLEKTSGNFPLWLAPVQAVIIPVNIQKHLKAAKKLYNKLLKENIRVNLDDNQDRLAKKVRQAIIEKIPLQLIVGDKEIENLEKLTCRGFKGEKITRISFNNFVKRVRRDG.

Residues 167–464 (DHRSLGKQLE…LLEKTSGNFP (298 aa)) are catalytic. Zn(2+) contacts are provided by Cys-260, His-311, and His-441.

Belongs to the class-II aminoacyl-tRNA synthetase family. As to quaternary structure, homodimer. Zn(2+) serves as cofactor.

It localises to the cytoplasm. It catalyses the reaction tRNA(Thr) + L-threonine + ATP = L-threonyl-tRNA(Thr) + AMP + diphosphate + H(+). Its function is as follows. Catalyzes the attachment of threonine to tRNA(Thr) in a two-step reaction: L-threonine is first activated by ATP to form Thr-AMP and then transferred to the acceptor end of tRNA(Thr). Also edits incorrectly charged L-seryl-tRNA(Thr). The chain is Threonine--tRNA ligase from Mycoplasma genitalium (strain ATCC 33530 / DSM 19775 / NCTC 10195 / G37) (Mycoplasmoides genitalium).